We begin with the raw amino-acid sequence, 102 residues long: NADH-quinone oxidoreductase subunit K (102 aa).

A run of 3 helical transmembrane segments spans residues 6–26, 31–51, and 62–82; these read ATHF…GVLT, LVIF…LIGF, and VFAL…LGIV.

It belongs to the complex I subunit 4L family. In terms of assembly, NDH-1 is composed of 14 different subunits. Subunits NuoA, H, J, K, L, M, N constitute the membrane sector of the complex.

The protein resides in the cell membrane. It catalyses the reaction a quinone + NADH + 5 H(+)(in) = a quinol + NAD(+) + 4 H(+)(out). Its function is as follows. NDH-1 shuttles electrons from NADH, via FMN and iron-sulfur (Fe-S) centers, to quinones in the respiratory chain. The immediate electron acceptor for the enzyme in this species is believed to be ubiquinone. Couples the redox reaction to proton translocation (for every two electrons transferred, four hydrogen ions are translocated across the cytoplasmic membrane), and thus conserves the redox energy in a proton gradient. In Thermomicrobium roseum (strain ATCC 27502 / DSM 5159 / P-2), this protein is NADH-quinone oxidoreductase subunit K.